We begin with the raw amino-acid sequence, 102 residues long: Trans-acting regulatory protein HvrA (102 aa).

A DNA-binding region spans residues 80-85 (RGRKPK).

The protein belongs to the histone-like protein H-NS family. In terms of assembly, homodimer that oligomerizes on DNA into higher-order complexes that form bridges between disparate regions of DNA compacting it.

Its subcellular location is the cytoplasm. It localises to the nucleoid. In terms of biological role, a dim-light trans-acting activator of Puf and Puh expression, that has no effect on the expression of the Puc operon. Responsible for regulating light-harvesting-I and reaction center structural gene expression differentially from that of light-harvesting-II expression in response to alterations in light. Proper light regulation of light-harvesting and reaction center polypeptide synthesis is an important physiological trait that enables cells to adapt to ever-changing environmental conditions of light intensity. In Rhodobacter capsulatus (Rhodopseudomonas capsulata), this protein is Trans-acting regulatory protein HvrA (hvrA).